The following is an 894-amino-acid chain: Interleukin enhancer-binding factor 3 (894 aa).

The DZF domain occupies 5 to 378 (RIFVNDDRHV…PMKRPMEEDG (374 aa)). A disordered region spans residues 50 to 86 (DEQEKGSSEQAESDNMDVPPEDDSKEGAGEQKTEHMT). Acidic residues predominate over residues 60–73 (AESDNMDVPPEDDS). Phosphoserine is present on Ser-62. Positions 74–86 (KEGAGEQKTEHMT) are enriched in basic and acidic residues. At Lys-100 the chain carries N6-acetyllysine. A Phosphothreonine; by PKR modification is found at Thr-188. Ser-190 carries the phosphoserine modification. Residue Lys-297 forms a Glycyl lysine isopeptide (Lys-Gly) (interchain with G-Cter in ubiquitin) linkage. A Phosphothreonine; by PKR modification is found at Thr-315. Lys-348 participates in a covalent cross-link: Glycyl lysine isopeptide (Lys-Gly) (interchain with G-Cter in SUMO1). The disordered stretch occupies residues 363–401 (TTYAITPMKRPMEEDGEEKSPSKKKKKIQKKEEKAEPPQ). Residues 371 to 389 (KRPMEEDGEEKSPSKKKKK) carry the Bipartite nuclear localization signal motif. Residues 372–383 (RPMEEDGEEKSP) are compositionally biased toward basic and acidic residues. 2 positions are modified to phosphoserine: Ser-382 and Ser-384. Residue Lys-396 forms a Glycyl lysine isopeptide (Lys-Gly) (interchain with G-Cter in SUMO2) linkage. The region spanning 398–467 (EPPQAMNALM…AVKVLQDMGL (70 aa)) is the DRBM 1 domain. Position 460 is an N6-acetyllysine (Lys-460). The segment at 466–524 (GLPTGAEGRDSSKGEDSAEETEAKPAVVAPAPVVEAVSTPSAAFPSDATAEQGPILTKH) is disordered. Over residues 472–481 (EGRDSSKGED) the composition is skewed to basic and acidic residues. Phosphoserine is present on residues Ser-476, Ser-477, and Ser-482. Lys-489 is covalently cross-linked (Glycyl lysine isopeptide (Lys-Gly) (interchain with G-Cter in SUMO2)). The span at 489–508 (KPAVVAPAPVVEAVSTPSAA) shows a compositional bias: low complexity. The region spanning 524-590 (HGKNPVMELN…ALAALEKLFP (67 aa)) is the DRBM 2 domain. Thr-592 carries the post-translational modification Phosphothreonine. The segment at 609 to 894 (RGGPKFAAKP…ADHSMNYQYR (286 aa)) is interaction with PRMT1. Disordered stretches follow at residues 625-660 (MGGPMHNEVPPPPNLRGRGRGGSIRGRGRGRGFGGA) and 718-894 (QGDN…YQYR). Gly residues predominate over residues 644-660 (RGGSIRGRGRGRGFGGA). 2 stretches are compositionally biased toward low complexity: residues 743–770 (PSYGSGYQSHQGQQQSYNQSPYSNYGPP) and 777–792 (YNHGQGSYSYSNSYNS). Ser-792, Ser-810, Ser-812, and Ser-816 each carry phosphoserine. Gly residues-rich tracts occupy residues 811–825 (GSGGRSGGNSYGSGG) and 832–851 (SHGGYGGGSGGGSSYQGKQG). The span at 857-866 (NYNSPGSGQN) shows a compositional bias: polar residues. The span at 867–878 (YSGPPSSYQSSQ) shows a compositional bias: low complexity.

In terms of assembly, identified in a IGF2BP1-dependent mRNP granule complex containing untranslated mRNAs. Interacts with FUS and SMN. Interacts (via C-terminus) with PRMT1. Forms a complex with ILF2. Can also bind to PRKDC/XRCC7: this may stabilize the interaction of PRKDC/XRCC7 and the heterodimeric complex of XRCC6/KU70 and XRCC5/KU80. Forms a heteromeric complex with ZNF346 and ILF3. Found in a nuclear export complex with XPO5, ILF3, Ran and double-stranded RNA or double-stranded minihelix VA1 RNA. Found in a nuclear export complex with XPO5, RAN, ILF3, ZNF346 and double-stranded RNA. Interacts with XPO5 and ZNF346. Forms a complex with ILF2, YLPM1, KHDRBS1, RBMX, NCOA5 and PPP1CA. Interacts with AGO1 and AGO2. Interacts with DHX36; this interaction occurs in a RNA-dependent manner. Interacts with ELAVL1; this interaction occurs in a RNA-dependent manner. Interacts with HAVCR2; this interaction promotes ILF3 ubiquitination and subsequent degradation. Phosphorylated at Thr-188 and Thr-315 by PKR in response to certain RNA viruses. This phosphorylation results in the dissociation of ILF2 from the ILF2-ILF3 complex resulting in a cytoplasmic sequestration of ILF3 where it can bind to viral RNAs and impede viral replication. Post-translationally, methylated by protein arginine N-methyltransferase 1. In terms of processing, ubiquitinated at Lys-297 in a TRIM47-dependent manner; this 'Lys-48'-linked ubiquitination promotes ILF3 degradation. In terms of tissue distribution, ubiquitous.

It localises to the nucleus. The protein resides in the nucleolus. It is found in the cytoplasm. Functionally, RNA-binding protein that plays an essential role in the biogenesis of circular RNAs (circRNAs) which are produced by back-splicing circularization of pre-mRNAs. Within the nucleus, promotes circRNAs processing by stabilizing the regulatory elements residing in the flanking introns of the circularized exons. Plays thereby a role in the back-splicing of a subset of circRNAs. As a consequence, participates in a wide range of transcriptional and post-transcriptional processes. Binds to poly-U elements and AU-rich elements (AREs) in the 3'-UTR of target mRNAs. Upon viral infection, ILF3 accumulates in the cytoplasm and participates in the innate antiviral response. Mechanistically, ILF3 becomes phosphorylated and activated by the double-stranded RNA-activated protein kinase/PKR which releases ILF3 from cellular mature circRNAs. In turn, unbound ILF3 molecules are able to interact with and thus inhibit viral mRNAs. (Microbial infection) Plays a positive role in HIV-1 virus production by binding to and thereby stabilizing HIV-1 RNA, together with ILF3. The sequence is that of Interleukin enhancer-binding factor 3 (ILF3) from Homo sapiens (Human).